Here is a 118-residue protein sequence, read N- to C-terminus: Protein BEX4 (118 aa).

The segment at 14–50 is disordered; it reads VEKDKKNKKGGKASKQSEEESHHLEEVENKKPGGNVR. A compositionally biased stretch (basic and acidic residues) spans 28–44; sequence KQSEEESHHLEEVENKK. Residues 30–88 are interaction with SIRT2; the sequence is SEEESHHLEEVENKKPGGNVRRKVRRLVPNFLWAIPNRHVDHSEGGEEVGRFVGQVMEA. Residues 30–118 form an interaction with alpha-tubulin region; that stretch reads SEEESHHLEE…DNHYDFCLIP (89 aa). Zn(2+) is bound at residue cysteine 115.

Belongs to the BEX family. In terms of assembly, interacts with alpha-tubulin. Interacts with SIRT2. Post-translationally, ubiquitinated and degraded by the proteasome.

The protein resides in the cytoplasm. The protein localises to the cytoskeleton. It localises to the spindle pole. Its subcellular location is the nucleus. In terms of biological role, may play a role in microtubule deacetylation by negatively regulating the SIRT2 deacetylase activity toward alpha-tubulin and thereby participate in the control of cell cycle progression and genomic stability. In absence of reductive stress, acts as a pseudosubstrate for the CRL2(FEM1B) complex: associates with FEM1B via zinc, thereby preventing association between FEM1B and its substrates. This Rattus norvegicus (Rat) protein is Protein BEX4.